The sequence spans 360 residues: Malate dehydrogenase (360 aa).

Belongs to the LDH2/MDH2 oxidoreductase family. In terms of assembly, homodimer.

It is found in the cytoplasm. It carries out the reaction (S)-malate + NAD(+) = oxaloacetate + NADH + H(+). This chain is Malate dehydrogenase (mdh), found in Pyrococcus horikoshii (strain ATCC 700860 / DSM 12428 / JCM 9974 / NBRC 100139 / OT-3).